The primary structure comprises 335 residues: Beta-ketoacyl-[acyl-carrier-protein] synthase III (335 aa).

Catalysis depends on residues C119 and H261. The ACP-binding stretch occupies residues 262–266; sequence QANQR. The active site involves N291.

The protein belongs to the thiolase-like superfamily. FabH family. In terms of assembly, homodimer.

The protein resides in the cytoplasm. The enzyme catalyses malonyl-[ACP] + acetyl-CoA + H(+) = 3-oxobutanoyl-[ACP] + CO2 + CoA. Its pathway is lipid metabolism; fatty acid biosynthesis. In terms of biological role, catalyzes the condensation reaction of fatty acid synthesis by the addition to an acyl acceptor of two carbons from malonyl-ACP. Catalyzes the first condensation reaction which initiates fatty acid synthesis and may therefore play a role in governing the total rate of fatty acid production. Possesses both acetoacetyl-ACP synthase and acetyl transacylase activities. Its substrate specificity determines the biosynthesis of branched-chain and/or straight-chain of fatty acids. The chain is Beta-ketoacyl-[acyl-carrier-protein] synthase III from Prochlorococcus marinus (strain MIT 9215).